Consider the following 115-residue polypeptide: uncharacterized protein (115 aa).

2 helical membrane-spanning segments follow: residues 15–35 and 52–72; these read FSTQ…EVLF and FDGV…YYSI.

The protein resides in the membrane. This is an uncharacterized protein from Saccharomyces cerevisiae (strain ATCC 204508 / S288c) (Baker's yeast).